Reading from the N-terminus, the 750-residue chain is Signal transducer and activator of transcription 1-alpha/beta (750 aa).

The residue at position 2 (S2) is an N-acetylserine. Residues K114, K175, K296, K366, K525, and K637 each carry the N6-methyllysine modification. A coiled-coil region spans residues 136–317 (LDKQKELDSK…LFQQLIQSSF (182 aa)). An SH2 domain is found at 573–670 (WNDGCIMGFI…ENPLKYLYPN (98 aa)). An ADP-ribosyl glutamic acid; by PARP14 modification is found at E657. K665 is subject to N6-methyllysine. Y701 bears the Phosphotyrosine; by JAK1, JAK2 or TYK2 mark. Residue K703 forms a Glycyl lysine isopeptide (Lys-Gly) (interchain with G-Cter in SUMO1); alternate linkage. Residue K703 forms a Glycyl lysine isopeptide (Lys-Gly) (interchain with G-Cter in SUMO2); alternate linkage. At E705 the chain carries ADP-ribosyl glutamic acid; by PARP14. Residue S708 is modified to Phosphoserine; by IKKE. S727 is subject to Phosphoserine; by CAMK2 and MAPK14. S745 bears the Phosphoserine; by IKKE mark. T749 is modified (phosphothreonine; by IKKB).

This sequence belongs to the transcription factor STAT family. Isoform alpha homodimerizes upon IFN-gamma induced phosphorylation. Heterodimer with STAT2 upon IFN-alpha/beta induced phosphorylation. The heterodimer STAT1:STAT2 forms the interferon-stimulated gene factor 3 complex (ISGF3) with IRF9. Interacts (phosphorylated at Ser-727) with PIAS1; the interaction results in release of STAT1 from its target gene. Interacts with IFNAR1; the interaction requires the phosphorylation of IFNAR1 at 'Tyr-466'. Interacts with IFNAR2. Found in a complex with NMI and CREBBP/CBP. Interacts with NMI which is required for CREBBP/CBP recruitment to the complex. Interacts with PTK2/FAK1. Interacts with SRC. Interacts with ERBB4 (phosphorylated). Interacts with PARP9 and DTX3L independently of IFN-beta or IFN-gamma-mediated STAT1 'Tyr-701' phosphorylation. Interacts with histone acetyltransferase EP300/p300 in response to INF-gamma stimulation. Independently of its phosphorylation status, interacts with OTOP1. Interacts with IFNGR1. Interacts with STAT4. In terms of assembly, (Microbial infection) Interacts with Sendai virus C', C, Y1 and Y2 proteins, preventing activation of ISRE and GAS promoter. As to quaternary structure, (Microbial infection) Interacts with Nipah virus P, V and W proteins preventing activation of ISRE and GAS promoter. (Microbial infection) Interacts with Rabies virus phosphoprotein preventing activation of ISRE and GAS promoter. In terms of assembly, (Microbial infection) Interacts with HCV core protein; the interaction results in STAT1 degradation. As to quaternary structure, (Microbial infection) Interacts with ebolavirus protein VP24. (Microbial infection) Interacts with Epstein-Barr virus (EBV) tegument protein BGLF2; this interaction leads to STAT1 dephosphorylation and inhibition. In terms of assembly, (Microbial infection) Interacts (via N-terminus) with measles V protein; this interaction inhibits STAT1 phosphorylation by Jak1 and thereby the type I interferon signaling pathway. In terms of processing, deubiquitinated by USP13; leading to STAT1 stabilization and positive regulation of type I and type II IFN signalings. Post-translationally, phosphorylated on tyrosine and serine residues in response to a variety of cytokines/growth hormones including IFN-alpha, IFN-gamma, PDGF and EGF. Activated KIT promotes phosphorylation on tyrosine residues and subsequent translocation to the nucleus. Upon EGF stimulation, phosphorylation on Tyr-701 (lacking in beta form) by JAK1, JAK2 or TYK2 promotes dimerization and subsequent translocation to the nucleus. Growth hormone (GH) activates STAT1 signaling only via JAK2. Tyrosine phosphorylated in response to constitutively activated FGFR1, FGFR2, FGFR3 and FGFR4. Phosphorylation on Ser-727 by several kinases including MAPK14, ERK1/2, CAMK2/CAMKII and CK2 in response to IFN-gamma stimulation, is required for maximal transcriptional activity. Phosphorylated on Ser-727 by CAMK2/CAMKII in response to IFN-gamma stimulation and calcium mobilization, promoting activity. Phosphorylated by CAMK2/CAMKII in response to IFN-beta stimulation and calcium mobilization in epithelial cells, promoting activity. Phosphorylation on Ser-727 promotes sumoylation though increasing interaction with PIAS. Phosphorylation on Ser-727 by PRKCD induces apoptosis in response to DNA-damaging agents. Phosphorylated on tyrosine residues when PTK2/FAK1 is activated; most likely this is catalyzed by a SRC family kinase. Dephosphorylation on tyrosine residues by PTPN2 negatively regulates interferon-mediated signaling. Upon viral infection or IFN induction, phosphorylation on Ser-708 occurs much later than phosphorylation on Tyr-701 and is required for the binding of ISGF3 on the ISREs of a subset of IFN-stimulated genes IKBKE-dependent. Phosphorylation at Tyr-701 and Ser-708 are mutually exclusive, phosphorylation at Ser-708 requires previous dephosphorylation of Tyr-701. Phosphorylation at Thr-749 by IKBKB/IKKB promotes transcriptional activation of ARID5A and IL12B by STAT1. Phosphorylation at Thr-749 restricts interferon signaling and anti-inflammatory responses and promotes innate inflammatory responses. Sumoylated with SUMO1, SUMO2 and SUMO3. Sumoylation is enhanced by IFN-gamma-induced phosphorylation on Ser-727, and by interaction with PIAS proteins. Enhances the transactivation activity. In terms of processing, ISGylated. Post-translationally, mono-ADP-ribosylated at Glu-657 and Glu-705 by PARP14; ADP-ribosylation prevents phosphorylation at Tyr-701. However, the role of ADP-ribosylation in the prevention of phosphorylation has been called into question and the lack of phosphorylation may be due to sumoylation of Lys-703. Monomethylated at Lys-525 by SETD2; monomethylation is necessary for phosphorylation at Tyr-701, translocation into the nucleus and activation of the antiviral defense. In terms of processing, (Microbial infection) Ubiquitinated by Herpes simplex virus 2 E3 ubiquitin ligase ICP22.

It is found in the cytoplasm. It localises to the nucleus. In terms of biological role, signal transducer and transcription activator that mediates cellular responses to interferons (IFNs), cytokine KITLG/SCF and other cytokines and other growth factors. Following type I IFN (IFN-alpha and IFN-beta) binding to cell surface receptors, signaling via protein kinases leads to activation of Jak kinases (TYK2 and JAK1) and to tyrosine phosphorylation of STAT1 and STAT2. The phosphorylated STATs dimerize and associate with ISGF3G/IRF-9 to form a complex termed ISGF3 transcription factor, that enters the nucleus. ISGF3 binds to the IFN stimulated response element (ISRE) to activate the transcription of IFN-stimulated genes (ISG), which drive the cell in an antiviral state. In response to type II IFN (IFN-gamma), STAT1 is tyrosine- and serine-phosphorylated. It then forms a homodimer termed IFN-gamma-activated factor (GAF), migrates into the nucleus and binds to the IFN gamma activated sequence (GAS) to drive the expression of the target genes, inducing a cellular antiviral state. Becomes activated in response to KITLG/SCF and KIT signaling. May mediate cellular responses to activated FGFR1, FGFR2, FGFR3 and FGFR4. Following bacterial lipopolysaccharide (LPS)-induced TLR4 endocytosis, phosphorylated at Thr-749 by IKBKB which promotes binding of STAT1 to the 5'-TTTGAGGC-3' sequence in the ARID5A promoter, resulting in transcriptional activation of ARID5A and subsequent ARID5A-mediated stabilization of IL6. Phosphorylation at Thr-749 also promotes binding of STAT1 to the 5'-TTTGAGTC-3' sequence in the IL12B promoter and activation of IL12B transcription. Involved in food tolerance in small intestine: associates with the Gasdermin-D, p13 cleavage product (13 kDa GSDMD) and promotes transcription of CIITA, inducing type 1 regulatory T (Tr1) cells in upper small intestine. In Homo sapiens (Human), this protein is Signal transducer and activator of transcription 1-alpha/beta (STAT1).